Reading from the N-terminus, the 335-residue chain is Ig gamma-2A chain C region secreted form (335 aa).

Ig-like domains are found at residues 6-98 (PSVY…KKIE), 126-225 (PSVF…KTIS), and 234-330 (PQVY…KTIS). An N-linked (GlcNAc...) asparagine glycan is attached at Asn-185.

The protein resides in the secreted. This chain is Ig gamma-2A chain C region secreted form, found in Mus musculus (Mouse).